The following is a 312-amino-acid chain: MEKIPLIVIAGLTATGKTDVAVELAQLVNGEIVSADSMCVYKLMDIGTAKPTKEQREAVRHHVIDVVFPDEDYNVAMFQKDATNAILDIYKRGKVPLLVGGTGFYIKSVVDDIEFPEMGDSKQVRKKLFDELNNKGNMYLYELLKEIDKDAANSVHPNNVKRVIRYLEIYFLTGKKPTEFLDKVRRKGSERYNVLPLCFIMEREALWQRIDQRVEKMFDMGLADEVKMLLDMGYSKDLKSMQGLGYKQVIPYVEGKISLQEAKEELKIRTRQFAKRQRIWFKYQGEFVFLDVTGMRFEEVVKKCFELCKSVV.

Residue 11-18 (GLTATGKT) participates in ATP binding. 13–18 (TATGKT) provides a ligand contact to substrate. Residues 36–39 (DSMC) form an interaction with substrate tRNA region.

It belongs to the IPP transferase family. As to quaternary structure, monomer. Mg(2+) serves as cofactor.

It catalyses the reaction adenosine(37) in tRNA + dimethylallyl diphosphate = N(6)-dimethylallyladenosine(37) in tRNA + diphosphate. In terms of biological role, catalyzes the transfer of a dimethylallyl group onto the adenine at position 37 in tRNAs that read codons beginning with uridine, leading to the formation of N6-(dimethylallyl)adenosine (i(6)A). The protein is tRNA dimethylallyltransferase of Caldicellulosiruptor bescii (strain ATCC BAA-1888 / DSM 6725 / KCTC 15123 / Z-1320) (Anaerocellum thermophilum).